The chain runs to 245 residues: 1-(5-phosphoribosyl)-5-[(5-phosphoribosylamino)methylideneamino] imidazole-4-carboxamide isomerase (245 aa).

Asp8 serves as the catalytic Proton acceptor. Catalysis depends on Asp130, which acts as the Proton donor.

This sequence belongs to the HisA/HisF family.

It is found in the cytoplasm. The catalysed reaction is 1-(5-phospho-beta-D-ribosyl)-5-[(5-phospho-beta-D-ribosylamino)methylideneamino]imidazole-4-carboxamide = 5-[(5-phospho-1-deoxy-D-ribulos-1-ylimino)methylamino]-1-(5-phospho-beta-D-ribosyl)imidazole-4-carboxamide. The protein operates within amino-acid biosynthesis; L-histidine biosynthesis; L-histidine from 5-phospho-alpha-D-ribose 1-diphosphate: step 4/9. The protein is 1-(5-phosphoribosyl)-5-[(5-phosphoribosylamino)methylideneamino] imidazole-4-carboxamide isomerase of Pseudomonas putida (strain GB-1).